We begin with the raw amino-acid sequence, 85 residues long: Cell division topological specificity factor (85 aa).

The protein belongs to the MinE family.

Functionally, prevents the cell division inhibition by proteins MinC and MinD at internal division sites while permitting inhibition at polar sites. This ensures cell division at the proper site by restricting the formation of a division septum at the midpoint of the long axis of the cell. This is Cell division topological specificity factor from Shewanella baltica (strain OS223).